The following is a 332-amino-acid chain: D-galactose/methyl-galactoside binding periplasmic protein MglB (332 aa).

The first 23 residues, 1 to 23 (MNKKVLTLSAVMASLLFGAHAHA), serve as a signal peptide directing secretion. 2 residues coordinate beta-D-galactose: aspartate 37 and asparagine 114. Beta-D-glucose is bound by residues aspartate 37 and asparagine 114. Positions 157, 159, 161, 163, and 165 each coordinate Ca(2+). Residues histidine 175, aspartate 177, and arginine 181 each contribute to the beta-D-galactose site. Residues histidine 175, aspartate 177, and arginine 181 each coordinate beta-D-glucose. Glutamate 228 contributes to the Ca(2+) binding site. 3 residues coordinate beta-D-galactose: asparagine 234, aspartate 259, and asparagine 279. Residues asparagine 234, aspartate 259, and asparagine 279 each contribute to the beta-D-glucose site.

This sequence belongs to the bacterial solute-binding protein 2 family. As to quaternary structure, the ABC transporter complex is composed of one ATP-binding protein (MglA), two transmembrane proteins (MglC) and a solute-binding protein (MglB).

Its subcellular location is the periplasm. Its function is as follows. Part of the ABC transporter complex MglABC involved in galactose/methyl galactoside import. In addition, binds D-galactose and D-glucose and plays a role in the chemotaxis towards these two sugars by interacting with the Trg chemoreceptor. This chain is D-galactose/methyl-galactoside binding periplasmic protein MglB (mglB), found in Salmonella typhimurium (strain LT2 / SGSC1412 / ATCC 700720).